The sequence spans 1211 residues: Diacylglycerol kinase eta (1211 aa).

The segment at 1 to 66 (MAGAGSQHHP…QMRTKTSIKE (66 aa)) is disordered. Over residues 19 to 32 (AGASAVSPTAAGPG) the composition is skewed to low complexity. Residues 52–61 (VSTSGQMRTK) show a composition bias toward polar residues. Residues 62–155 (TSIKEGQLLK…WISSLKSVQS (94 aa)) enclose the PH domain. 2 consecutive Phorbol-ester/DAG-type zinc fingers follow at residues 172-222 (MHNW…TNNC) and 244-295 (PHQW…HPVC). The DAGKc domain occupies 325–460 (FCVSPLLVFV…LDRWSIMTYE (136 aa)). 2 disordered regions span residues 562–613 (SQAS…KPRE) and 634–694 (KVMD…SVAG). Acidic residues-rich tracts occupy residues 576-589 (PEEDTVESASDESL) and 653-662 (YDTETDEAKE). A compositionally biased stretch (polar residues) spans 670–691 (SAKTTSQSPDAQASCGHPQTDS). The 64-residue stretch at 1143-1206 (WGTEEVAAWL…LQGIKELERN (64 aa)) folds into the SAM domain.

Belongs to the eukaryotic diacylglycerol kinase family. Interacts with RAF1 and BRAF. In terms of assembly, homooligomers. Heterooligomers. Oligomerization through the SAM domain inhibits the diacylglycerol kinase activity. Heterooligomerizes with SAM domain-containing isoforms of DGKD. As to quaternary structure, does not form homooligomers. In terms of processing, phosphorylated. Phosphorylation does not inhibit catalytic activity. Widely expressed. Detected in the granulosa cells of the primary and secondary follicles. Expressed in mature follicles and corpus lutea. Expressed in the oviductal epithelium. In the uterus, strongly expressed in the luminal epithelium. Detected in the uterine glands. As to expression, detected in ovary and uterus (at protein level). In terms of tissue distribution, specifically expressed in testis. Detected in the inner area of the testis. Strongly expressed in the secondary spermatocytes and the round spermatids and weakly detected in the primary spermatocytes.

It is found in the cytoplasm. The protein resides in the cell membrane. The protein localises to the cytoskeleton. The catalysed reaction is a 1,2-diacyl-sn-glycerol + ATP = a 1,2-diacyl-sn-glycero-3-phosphate + ADP + H(+). The enzyme catalyses 1,2-di-(9Z-octadecenoyl)-sn-glycerol + ATP = 1,2-di-(9Z-octadecenoyl)-sn-glycero-3-phosphate + ADP + H(+). It functions in the pathway lipid metabolism; glycerolipid metabolism. Functionally, diacylglycerol kinase that converts diacylglycerol/DAG into phosphatidic acid/phosphatidate/PA and regulates the respective levels of these two bioactive lipids. Thereby, acts as a central switch between the signaling pathways activated by these second messengers with different cellular targets and opposite effects in numerous biological processes. Plays a key role in promoting cell growth. Activates the Ras/B-Raf/C-Raf/MEK/ERK signaling pathway induced by EGF. Regulates the recruitment of RAF1 and BRAF from cytoplasm to membranes and their heterodimerization. This Mus musculus (Mouse) protein is Diacylglycerol kinase eta.